A 184-amino-acid chain; its full sequence is ATP synthase subunit b (184 aa).

The chain crosses the membrane as a helical span at residues 4–24; sequence LSVLFALVASPALAASGPFFS.

This sequence belongs to the ATPase B chain family. In terms of assembly, F-type ATPases have 2 components, F(1) - the catalytic core - and F(0) - the membrane proton channel. F(1) has five subunits: alpha(3), beta(3), gamma(1), delta(1), epsilon(1). F(0) has three main subunits: a(1), b(2) and c(10-14). The alpha and beta chains form an alternating ring which encloses part of the gamma chain. F(1) is attached to F(0) by a central stalk formed by the gamma and epsilon chains, while a peripheral stalk is formed by the delta and b chains.

The protein localises to the cell inner membrane. In terms of biological role, f(1)F(0) ATP synthase produces ATP from ADP in the presence of a proton or sodium gradient. F-type ATPases consist of two structural domains, F(1) containing the extramembraneous catalytic core and F(0) containing the membrane proton channel, linked together by a central stalk and a peripheral stalk. During catalysis, ATP synthesis in the catalytic domain of F(1) is coupled via a rotary mechanism of the central stalk subunits to proton translocation. Its function is as follows. Component of the F(0) channel, it forms part of the peripheral stalk, linking F(1) to F(0). This chain is ATP synthase subunit b, found in Paracoccus denitrificans (strain Pd 1222).